The primary structure comprises 696 residues: Methionine synthase reductase (696 aa).

In terms of domain architecture, Flavodoxin-like spans 4 to 147 (FLLLYATQRG…VVEPWIDGLW (144 aa)). FMN-binding positions include 10–14 (TQRGQ) and 93–124 (LLGL…QRFY). Positions 166-245 (TLSRASDAPL…SSLSIPAVPP (80 aa)) are hinge. A phosphoserine mark is found at serine 171 and serine 188. Residues 269-531 (DPSFQVPISK…PRATNAFHLP (263 aa)) form the FAD-binding FR-type domain. Lysine 289 contacts NADP(+). Residues 449–452 (RPYS) and 485–488 (GVCT) contribute to the FAD site. NADP(+)-binding positions include 608-609 (SR), 622-624 (YVQ), and aspartate 657. Tryptophan 695 provides a ligand contact to FAD.

As to quaternary structure, forms a multiprotein complex with MMACHC, MMADHC and MTR. FAD serves as cofactor. Requires FMN as cofactor.

The protein localises to the cytoplasm. The catalysed reaction is 2 methylcob(III)alamin-[methionine synthase] + 2 S-adenosyl-L-homocysteine + NADP(+) + H(+) = 2 cob(II)alamin-[methionine synthase] + 2 S-adenosyl-L-methionine + NADPH. It carries out the reaction 2 cob(II)alamin + A + 2 H2O + 2 H(+) = 2 aquacob(III)alamin + AH2. Its function is as follows. Key enzyme in methionine and folate homeostasis responsible for the reactivation of methionine synthase (MTR/MS) activity by catalyzing the reductive methylation of MTR-bound cob(II)alamin. Cobalamin (vitamin B12) forms a complex with MTR to serve as an intermediary in methyl transfer reactions that cycles between MTR-bound methylcob(III)alamin and MTR bound-cob(I)alamin forms, and occasional oxidative escape of the cob(I)alamin intermediate during the catalytic cycle leads to the inactive cob(II)alamin species. The processing of cobalamin in the cytosol occurs in a multiprotein complex composed of at least MMACHC, MMADHC, MTRR and MTR which may contribute to shuttle safely and efficiently cobalamin towards MTR in order to produce methionine. Also necessary for the utilization of methyl groups from the folate cycle, thereby affecting transgenerational epigenetic inheritance. Also acts as a molecular chaperone for methionine synthase by stabilizing apoMTR and incorporating methylcob(III)alamin into apoMTR to form the holoenzyme. Also serves as an aquacob(III)alamin reductase by reducing aquacob(III)alamin to cob(II)alamin; this reduction leads to stimulation of the conversion of apoMTR and aquacob(III)alamin to MTR holoenzyme. This Mus musculus (Mouse) protein is Methionine synthase reductase.